The primary structure comprises 329 residues: Ankyrin repeat and SOCS box protein 5 (329 aa).

6 ANK repeats span residues 69–98 (ADRS…NVNA), 102–131 (DHVT…NVNA), 135–164 (DGVT…KPQL), 167–196 (CLPS…DVDQ), 200–229 (HLGT…DVQK), and 232–261 (YWDT…DINA). Residues 278–329 (LVERLLLQHEATPSSLCQLCRLCIRNYIGRPRLHLIPQLQLPTLLQNFLQYR) form the SOCS box domain.

This sequence belongs to the ankyrin SOCS box (ASB) family.

Its pathway is protein modification; protein ubiquitination. Functionally, may be a substrate-recognition component of a SCF-like ECS (Elongin-Cullin-SOCS-box protein) E3 ubiquitin-protein ligase complex which mediates the ubiquitination and subsequent proteasomal degradation of target proteins. May play a role in the initiation of arteriogenesis. This Bos taurus (Bovine) protein is Ankyrin repeat and SOCS box protein 5 (ASB5).